The chain runs to 101 residues: Small ribosomal subunit protein bS18c (101 aa).

This sequence belongs to the bacterial ribosomal protein bS18 family. As to quaternary structure, part of the 30S ribosomal subunit.

Its subcellular location is the plastid. It is found in the chloroplast. This Oenothera biennis (German evening primrose) protein is Small ribosomal subunit protein bS18c.